The following is a 145-amino-acid chain: Regulator of sigma D (145 aa).

The protein belongs to the Rsd/AlgQ family. Interacts with RpoD.

Its subcellular location is the cytoplasm. In terms of biological role, binds RpoD and negatively regulates RpoD-mediated transcription activation by preventing the interaction between the primary sigma factor RpoD with the catalytic core of the RNA polymerase and with promoter DNA. May be involved in replacement of the RNA polymerase sigma subunit from RpoD to RpoS during the transition from exponential growth to the stationary phase. The sequence is that of Regulator of sigma D from Sodalis glossinidius (strain morsitans).